We begin with the raw amino-acid sequence, 567 residues long: Proline--tRNA ligase (567 aa).

Belongs to the class-II aminoacyl-tRNA synthetase family. ProS type 1 subfamily. In terms of assembly, homodimer.

Its subcellular location is the cytoplasm. It catalyses the reaction tRNA(Pro) + L-proline + ATP = L-prolyl-tRNA(Pro) + AMP + diphosphate. Functionally, catalyzes the attachment of proline to tRNA(Pro) in a two-step reaction: proline is first activated by ATP to form Pro-AMP and then transferred to the acceptor end of tRNA(Pro). As ProRS can inadvertently accommodate and process non-cognate amino acids such as alanine and cysteine, to avoid such errors it has two additional distinct editing activities against alanine. One activity is designated as 'pretransfer' editing and involves the tRNA(Pro)-independent hydrolysis of activated Ala-AMP. The other activity is designated 'posttransfer' editing and involves deacylation of mischarged Ala-tRNA(Pro). The misacylated Cys-tRNA(Pro) is not edited by ProRS. This chain is Proline--tRNA ligase, found in Staphylococcus aureus (strain bovine RF122 / ET3-1).